The sequence spans 48 residues: Delta-stichotoxin-Hcr1b (48 aa).

3 disulfides stabilise this stretch: C3/C43, C5/C33, and C26/C44.

Belongs to the sea anemone sodium channel inhibitory toxin family. Type II subfamily.

It localises to the secreted. It is found in the nematocyst. Its function is as follows. Binds to site 3 of voltage-gated sodium channels and inhibits the inactivation process. In Radianthus crispa (Leathery sea anemone), this protein is Delta-stichotoxin-Hcr1b.